The following is a 581-amino-acid chain: Prolactin receptor (581 aa).

The first 24 residues, Met1–Gly24, serve as a signal peptide directing secretion. The Extracellular portion of the chain corresponds to Gln25–Met237. 2 consecutive Fibronectin type-III domains span residues Pro27 to Pro127 and Pro129 to Asp229. Cys36 and Cys46 are disulfide-bonded. The N-linked (GlcNAc...) asparagine glycan is linked to Asn59. A disulfide bridge links Cys75 with Cys86. An N-linked (GlcNAc...) asparagine glycan is attached at Asn132. Residues Asp211 and His212 each coordinate Zn(2+). Positions Trp215 to Ser219 match the WSXWS motif motif. Residues Trp238–Leu258 form a helical membrane-spanning segment. Residues Lys259 to Pro581 lie on the Cytoplasmic side of the membrane. The Box 1 motif signature appears at Ile267 to Lys275. Disordered stretches follow at residues Gln324–Glu384 and Asp458–Gln499. 3 stretches are compositionally biased toward basic and acidic residues: residues Pro329–Ser349, His375–Glu384, and Glu469–Glu483.

The protein belongs to the type I cytokine receptor family. Type 1 subfamily. Interacts with SMARCA1. Interacts with NEK3 and VAV2 and this interaction is prolactin-dependent. As to expression, expressed in all tissues examined; liver, peripheral blood lymphocytes, endometrium, corpus luteum, intestine, fetal thymus, fetal spleen, fetal liver and fetal brain.

The protein resides in the membrane. In terms of biological role, this is a receptor for the anterior pituitary hormone prolactin. The chain is Prolactin receptor (PRLR) from Bos taurus (Bovine).